A 559-amino-acid polypeptide reads, in one-letter code: Nuclear speckle splicing regulatory protein 1 (559 aa).

The disordered stretch occupies residues V22–K57. S27 and S33 each carry phosphoserine. Positions D32 to S41 are enriched in acidic residues. The stretch at I105–R179 forms a coiled coil. The segment at N107–A171 is necessary for alternative splicing activity. The disordered stretch occupies residues E195–T534. Basic and acidic residues predominate over residues R204–S219. Residue K211 forms a Glycyl lysine isopeptide (Lys-Gly) (interchain with G-Cter in SUMO2) linkage. Residues S249, S255, and S256 each carry the phosphoserine modification. Basic and acidic residues predominate over residues F251–T274. At T276 the chain carries Phosphothreonine. K282 participates in a covalent cross-link: Glycyl lysine isopeptide (Lys-Gly) (interchain with G-Cter in SUMO2). Basic and acidic residues-rich tracts occupy residues E314–D343, S351–E488, and R502–V521. Positions K379–R428 form a coiled coil. At S458 the chain carries Phosphoserine.

The protein belongs to the NSRP1 family. Interacts (via C-terminus) with SRSF1. Interacts (via C-terminus) with SRSF2.

It localises to the nucleus. It is found in the nucleus speckle. RNA-binding protein that mediates pre-mRNA alternative splicing regulation. The sequence is that of Nuclear speckle splicing regulatory protein 1 (NSRP1) from Bos taurus (Bovine).